A 537-amino-acid polypeptide reads, in one-letter code: Berberine bridge enzyme-like 26 (537 aa).

The N-terminal stretch at 1-27 (MGISKPLPLFSILVLYFSLYTITPTSS) is a signal peptide. C38 and C102 form a disulfide bridge. An N-linked (GlcNAc...) asparagine glycan is attached at N59. Residues 80-256 (SMPKPGFIFS…LAWKIKLVPV (177 aa)) enclose the FAD-binding PCMH-type domain. A cross-link (6-(S-cysteinyl)-8alpha-(pros-histidyl)-FAD (His-Cys)) is located at residues 117–181 (HDYEGLSYVS…KVHGFPAGLC (65 aa)). Residue N306 is glycosylated (N-linked (GlcNAc...) asparagine).

It belongs to the oxygen-dependent FAD-linked oxidoreductase family. Requires FAD as cofactor. In terms of processing, the FAD cofactor is bound via a bicovalent 6-S-cysteinyl, 8alpha-N1-histidyl FAD linkage.

The protein resides in the secreted. It localises to the cell wall. The chain is Berberine bridge enzyme-like 26 from Arabidopsis thaliana (Mouse-ear cress).